The following is an 84-amino-acid chain: Small ribosomal subunit protein bS20 (84 aa).

This sequence belongs to the bacterial ribosomal protein bS20 family.

Its function is as follows. Binds directly to 16S ribosomal RNA. The chain is Small ribosomal subunit protein bS20 from Bacteroides thetaiotaomicron (strain ATCC 29148 / DSM 2079 / JCM 5827 / CCUG 10774 / NCTC 10582 / VPI-5482 / E50).